Reading from the N-terminus, the 409-residue chain is tRNA(Met) cytidine acetate ligase (409 aa).

Residues 7-20 (VVEY…HLYH), glycine 102, asparagine 169, and arginine 194 contribute to the ATP site.

The protein belongs to the TmcAL family.

The protein resides in the cytoplasm. It carries out the reaction cytidine(34) in elongator tRNA(Met) + acetate + ATP = N(4)-acetylcytidine(34) in elongator tRNA(Met) + AMP + diphosphate. Its function is as follows. Catalyzes the formation of N(4)-acetylcytidine (ac(4)C) at the wobble position of elongator tRNA(Met), using acetate and ATP as substrates. First activates an acetate ion to form acetyladenylate (Ac-AMP) and then transfers the acetyl group to tRNA to form ac(4)C34. This is tRNA(Met) cytidine acetate ligase from Clostridium botulinum (strain Okra / Type B1).